Here is a 225-residue protein sequence, read N- to C-terminus: Leucyl/phenylalanyl-tRNA--protein transferase (225 aa).

Belongs to the L/F-transferase family.

It localises to the cytoplasm. It carries out the reaction N-terminal L-lysyl-[protein] + L-leucyl-tRNA(Leu) = N-terminal L-leucyl-L-lysyl-[protein] + tRNA(Leu) + H(+). The enzyme catalyses N-terminal L-arginyl-[protein] + L-leucyl-tRNA(Leu) = N-terminal L-leucyl-L-arginyl-[protein] + tRNA(Leu) + H(+). It catalyses the reaction L-phenylalanyl-tRNA(Phe) + an N-terminal L-alpha-aminoacyl-[protein] = an N-terminal L-phenylalanyl-L-alpha-aminoacyl-[protein] + tRNA(Phe). Functionally, functions in the N-end rule pathway of protein degradation where it conjugates Leu, Phe and, less efficiently, Met from aminoacyl-tRNAs to the N-termini of proteins containing an N-terminal arginine or lysine. This is Leucyl/phenylalanyl-tRNA--protein transferase from Gluconobacter oxydans (strain 621H) (Gluconobacter suboxydans).